A 532-amino-acid chain; its full sequence is Phosphoenolpyruvate carboxykinase (ATP) (532 aa).

The substrate site is built by arginine 60, tyrosine 194, and lysine 200. ATP is bound by residues lysine 200, histidine 219, and 237-245; that span reads GLSGTGKTT. 2 residues coordinate Mn(2+): lysine 200 and histidine 219. A Mn(2+)-binding site is contributed by aspartate 258. Positions 286, 324, and 449 each coordinate ATP. Position 324 (arginine 324) interacts with substrate.

It belongs to the phosphoenolpyruvate carboxykinase (ATP) family. Requires Mn(2+) as cofactor.

The protein resides in the cytoplasm. The catalysed reaction is oxaloacetate + ATP = phosphoenolpyruvate + ADP + CO2. The protein operates within carbohydrate biosynthesis; gluconeogenesis. Its function is as follows. Involved in the gluconeogenesis. Catalyzes the conversion of oxaloacetate (OAA) to phosphoenolpyruvate (PEP) through direct phosphoryl transfer between the nucleoside triphosphate and OAA. This Cereibacter sphaeroides (strain ATCC 17025 / ATH 2.4.3) (Rhodobacter sphaeroides) protein is Phosphoenolpyruvate carboxykinase (ATP).